Here is a 277-residue protein sequence, read N- to C-terminus: Caspase-6 (277 aa).

A propeptide spanning residues 1 to 5 is cleaved from the precursor; that stretch reads MTETD. The interval 25–27 is tri-arginine exosite; that stretch reads KRR. S62 carries the phosphoserine modification. Residue H104 is part of the active site. The interval 108–125 is 130's region; it reads NHIYAYDAKIEIQTLTGL. C146 is an active-site residue. A propeptide spanning residues 163–176 is cleaved from the precursor; it reads HQTDKLDDNVTQVD. S240 is modified (phosphoserine). 2 S-palmitoyl cysteine lipidation sites follow: C247 and C260.

This sequence belongs to the peptidase C14A family. As to quaternary structure, heterotetramer that consists of two anti-parallel arranged heterodimers, each one formed by a 18 kDa (p18) and a 11 kDa (p11) subunits. Interacts with BIRC6/bruce. Interacts with RIPK3. In terms of assembly, heterotetramer that consists of two anti-parallel arranged heterodimers, each one formed by a 18 kDa (Caspase-6 subunit p18) and a 11 kDa (Caspase-6 subunit p11) subunit. Post-translationally, phosphorylated by NUAK1; phosphorylation inhibits self-activation. Phosphorylation at Ser-240 by AMP-activated protein kinase (PRKAA1 or PRKAA2) inhibits autocleavage, preventing caspase activation, thereby preventing hepatocyte apoptosis. In terms of processing, palmitoylation by ZDHHC17 blocks dimerization and subsequent activation, leading to inhibit the cysteine protease activity. Can be cleaved and activated by different caspases, depending on the context. Cleaved and activated by caspase-8 (CASP8) and subsequently by caspase-3 (CASP3). Can also undergo autoactivation by mediating autocleavage at Asp-162 and Asp-176, while it is not able to cleave its N-terminal disordered prodomain. Cleaved and activated by CASP1, possibly in the context of inflammation.

Its subcellular location is the cytoplasm. The protein localises to the nucleus. The catalysed reaction is Strict requirement for Asp at position P1 and has a preferred cleavage sequence of Val-Glu-His-Asp-|-.. Its activity is regulated as follows. During activation, the N-terminal disordered prodomain is removed by cleavage. Concomitantly, double cleavage gives rise to a large 18-kDa and a small 11-kDa subunit. The two large and two small subunits then assemble to form the active CASP6 complex. Can be cleaved and activated by different caspases, depending on the context. Cleaved and activated by caspase-8 (CASP8) and subsequently by caspase-3 (CASP3). Can also undergo autoactivation by mediating autocleavage at Asp-162 and Asp-176, while it is not able to cleave its N-terminal disordered prodomain. Intramolecular cleavage at Asp-176 is a prerequisite for CASP6 self-activation. Cleaved and activated by CASP1 in neurons, possibly in the context of inflammation. Phosphorylation at Ser-240 inhibits autocleavage, preventing caspase activation. In terms of biological role, cysteine protease that plays essential roles in programmed cell death, axonal degeneration, development and innate immunity. Acts as a non-canonical executioner caspase during apoptosis: localizes in the nucleus and cleaves the nuclear structural protein NUMA1 and lamin A/LMNA thereby inducing nuclear shrinkage and fragmentation. Lamin-A/LMNA cleavage is required for chromatin condensation and nuclear disassembly during apoptotic execution. Acts as a regulator of liver damage by promoting hepatocyte apoptosis: in absence of phosphorylation by AMP-activated protein kinase (AMPK), catalyzes cleavage of BID, leading to cytochrome c release, thereby participating in nonalcoholic steatohepatitis. Cleaves PARK7/DJ-1 in cells undergoing apoptosis. Involved in intrinsic apoptosis by mediating cleavage of RIPK1. Furthermore, cleaves many transcription factors such as NF-kappa-B and cAMP response element-binding protein/CREBBP. Cleaves phospholipid scramblase proteins XKR4 and XKR9. In addition to apoptosis, involved in different forms of programmed cell death. Plays an essential role in defense against viruses by acting as a central mediator of the ZBP1-mediated pyroptosis, apoptosis, and necroptosis (PANoptosis), independently of its cysteine protease activity. PANoptosis is a unique inflammatory programmed cell death, which provides a molecular scaffold that allows the interactions and activation of machinery required for inflammasome/pyroptosis, apoptosis and necroptosis. Mechanistically, interacts with RIPK3 and enhances the interaction between RIPK3 and ZBP1, leading to ZBP1-mediated inflammasome activation and cell death. Plays an essential role in axon degeneration during axon pruning which is the remodeling of axons during neurogenesis but not apoptosis. Regulates B-cell programs both during early development and after antigen stimulation. The chain is Caspase-6 from Rattus norvegicus (Rat).